The following is a 225-amino-acid chain: ATP-dependent dethiobiotin synthetase BioD 1 (225 aa).

2 residues coordinate Mg(2+): E13 and T17. An ATP-binding site is contributed by 13–18; it reads EVGKTV. Residue K38 is part of the active site. Residue S42 coordinates substrate. Residues D55 and E116 each coordinate Mg(2+). ATP is bound by residues D55, 116–119, and 176–177; these read EGAG and ND. Substrate is bound at residue Y188. Residues 205-207 and E212 contribute to the ATP site; that span reads PWL.

It belongs to the dethiobiotin synthetase family. In terms of assembly, homodimer. It depends on Mg(2+) as a cofactor.

The protein resides in the cytoplasm. The catalysed reaction is (7R,8S)-7,8-diammoniononanoate + CO2 + ATP = (4R,5S)-dethiobiotin + ADP + phosphate + 3 H(+). The protein operates within cofactor biosynthesis; biotin biosynthesis; biotin from 7,8-diaminononanoate: step 1/2. Catalyzes a mechanistically unusual reaction, the ATP-dependent insertion of CO2 between the N7 and N8 nitrogen atoms of 7,8-diaminopelargonic acid (DAPA, also called 7,8-diammoniononanoate) to form a ureido ring. Only CTP can partially replace ATP while diaminobiotin is only 37% as effective as 7,8-diaminopelargonic acid. In another study both CTP and GTP (but not ITP, TTP or UTP) can partially replace ATP. This is ATP-dependent dethiobiotin synthetase BioD 1 from Escherichia coli (strain K12).